Consider the following 529-residue polypeptide: Peptide chain release factor 3 (529 aa).

Positions 11–280 (AARRTFAIIS…GLVAWAPPPM (270 aa)) constitute a tr-type G domain. Residues 20-27 (SHPDAGKT), 88-92 (DTPGH), and 142-145 (NKVD) contribute to the GTP site.

The protein belongs to the TRAFAC class translation factor GTPase superfamily. Classic translation factor GTPase family. PrfC subfamily.

The protein resides in the cytoplasm. Functionally, increases the formation of ribosomal termination complexes and stimulates activities of RF-1 and RF-2. It binds guanine nucleotides and has strong preference for UGA stop codons. It may interact directly with the ribosome. The stimulation of RF-1 and RF-2 is significantly reduced by GTP and GDP, but not by GMP. The polypeptide is Peptide chain release factor 3 (Sodalis glossinidius (strain morsitans)).